A 226-amino-acid polypeptide reads, in one-letter code: ATP synthase subunit a (226 aa).

The next 6 membrane-spanning stretches (helical) occupy residues 17 to 37 (FSYF…AMMA), 79 to 99 (LVAT…IPGF), 105 to 125 (SLNL…FEGI), 134 to 154 (FAHF…IEIV), 176 to 196 (LFLM…AYVL), and 199 to 219 (FMAF…LAGA).

It belongs to the ATPase A chain family. As to quaternary structure, F-type ATPases have 2 components, CF(1) - the catalytic core - and CF(0) - the membrane proton channel. CF(1) has five subunits: alpha(3), beta(3), gamma(1), delta(1), epsilon(1). CF(0) has three main subunits: a(1), b(2) and c(9-12). The alpha and beta chains form an alternating ring which encloses part of the gamma chain. CF(1) is attached to CF(0) by a central stalk formed by the gamma and epsilon chains, while a peripheral stalk is formed by the delta and b chains.

The protein localises to the cell inner membrane. Its function is as follows. Key component of the proton channel; it plays a direct role in the translocation of protons across the membrane. This chain is ATP synthase subunit a, found in Campylobacter jejuni subsp. jejuni serotype O:6 (strain 81116 / NCTC 11828).